The chain runs to 505 residues: RNA-splicing ligase RtcB homolog (505 aa).

Mn(2+) contacts are provided by Asp-119, Cys-122, His-227, and His-259. Asn-226–Glu-230 lines the GMP pocket. Ser-300 is modified (phosphoserine). Residue His-353 participates in Mn(2+) binding. GMP contacts are provided by residues His-353 to Asn-354, Gly-402 to Met-405, Ser-409, and His-428 to Gly-431. The GMP-histidine intermediate role is filled by His-428. Lys-496 participates in a covalent cross-link: Glycyl lysine isopeptide (Lys-Gly) (interchain with G-Cter in SUMO2). Lys-504 serves as a coordination point for GMP.

This sequence belongs to the RtcB family. In terms of assembly, catalytic component of the tRNA-splicing ligase complex. Mn(2+) serves as cofactor.

Its subcellular location is the nucleus. The protein resides in the cytoplasm. It catalyses the reaction a 3'-end 3'-phospho-ribonucleotide-RNA + a 5'-end dephospho-ribonucleoside-RNA + GTP = a ribonucleotidyl-ribonucleotide-RNA + GMP + diphosphate. The catalysed reaction is a 3'-end 2',3'-cyclophospho-ribonucleotide-RNA + a 5'-end dephospho-ribonucleoside-RNA + GTP + H2O = a ribonucleotidyl-ribonucleotide-RNA + GMP + diphosphate + H(+). In terms of biological role, catalytic subunit of the tRNA-splicing ligase complex that acts by directly joining spliced tRNA halves to mature-sized tRNAs by incorporating the precursor-derived splice junction phosphate into the mature tRNA as a canonical 3',5'-phosphodiester. May act as an RNA ligase with broad substrate specificity, and may function toward other RNAs. This is RNA-splicing ligase RtcB homolog from Macaca fascicularis (Crab-eating macaque).